Consider the following 147-residue polypeptide: UPF0735 ACT domain-containing protein RBAM_024960 (147 aa).

Residues 70–145 (TLFFHLEDRS…FIEKVEILGS (76 aa)) form the ACT domain.

Belongs to the UPF0735 family.

This Bacillus velezensis (strain DSM 23117 / BGSC 10A6 / LMG 26770 / FZB42) (Bacillus amyloliquefaciens subsp. plantarum) protein is UPF0735 ACT domain-containing protein RBAM_024960.